The primary structure comprises 1072 residues: Integrator complex subunit 3 homolog (1072 aa).

Disordered regions lie at residues 920–941 and 1002–1072; these read YPSSSPNKRKRPPKGISVSTSI and DTTV…NDSD. Ser-1042, Ser-1043, Ser-1047, and Ser-1048 each carry phosphoserine.

It belongs to the Integrator subunit 3 family. As to quaternary structure, belongs to the multiprotein complex Integrator, at least composed of IntS1, IntS2, IntS3, IntS4, omd/IntS5, IntS6, defl/IntS7, IntS8, IntS9, IntS10, IntS11, IntS12, asun/IntS13, IntS14 and IntS15. The core complex associates with protein phosphatase 2A subunits mts/PP2A and Pp2A-29B, to form the Integrator-PP2A (INTAC) complex.

The protein localises to the nucleus. It localises to the cytoplasm. Functionally, component of the integrator complex, a multiprotein complex that terminates RNA polymerase II (Pol II) transcription in the promoter-proximal region of genes. The integrator complex provides a quality checkpoint during transcription elongation by driving premature transcription termination of transcripts that are unfavorably configured for transcriptional elongation: the complex terminates transcription by (1) catalyzing dephosphorylation of the C-terminal domain (CTD) of Pol II subunit Polr2A/Rbp1 and Spt5, and (2) degrading the exiting nascent RNA transcript via endonuclease activity. The integrator complex is also involved in the 3'-end processing of the U7 snRNA, and also the spliceosomal snRNAs U1, U2, U4 and U5. The chain is Integrator complex subunit 3 homolog (IntS3) from Drosophila erecta (Fruit fly).